The primary structure comprises 193 residues: Crossover junction endodeoxyribonuclease RuvC (193 aa).

Residues Asp-7, Glu-68, and Asp-141 contribute to the active site. The Mg(2+) site is built by Asp-7, Glu-68, and Asp-141.

The protein belongs to the RuvC family. In terms of assembly, homodimer which binds Holliday junction (HJ) DNA. The HJ becomes 2-fold symmetrical on binding to RuvC with unstacked arms; it has a different conformation from HJ DNA in complex with RuvA. In the full resolvosome a probable DNA-RuvA(4)-RuvB(12)-RuvC(2) complex forms which resolves the HJ. It depends on Mg(2+) as a cofactor.

It localises to the cytoplasm. It catalyses the reaction Endonucleolytic cleavage at a junction such as a reciprocal single-stranded crossover between two homologous DNA duplexes (Holliday junction).. Its function is as follows. The RuvA-RuvB-RuvC complex processes Holliday junction (HJ) DNA during genetic recombination and DNA repair. Endonuclease that resolves HJ intermediates. Cleaves cruciform DNA by making single-stranded nicks across the HJ at symmetrical positions within the homologous arms, yielding a 5'-phosphate and a 3'-hydroxyl group; requires a central core of homology in the junction. The consensus cleavage sequence is 5'-(A/T)TT(C/G)-3'. Cleavage occurs on the 3'-side of the TT dinucleotide at the point of strand exchange. HJ branch migration catalyzed by RuvA-RuvB allows RuvC to scan DNA until it finds its consensus sequence, where it cleaves and resolves the cruciform DNA. The sequence is that of Crossover junction endodeoxyribonuclease RuvC from Renibacterium salmoninarum (strain ATCC 33209 / DSM 20767 / JCM 11484 / NBRC 15589 / NCIMB 2235).